Reading from the N-terminus, the 679-residue chain is DNA ligase (679 aa).

NAD(+) is bound by residues 86–90 (DEAYD) and 129–130 (ST). Lys-167 functions as the N6-AMP-lysine intermediate in the catalytic mechanism. Residues Arg-183, Glu-214, and Lys-326 each contribute to the NAD(+) site. Zn(2+)-binding residues include Cys-417, Cys-420, Cys-433, and Cys-439. In terms of domain architecture, BRCT spans 599 to 679 (GEKSPISGKT…EAYRQLVSLD (81 aa)).

This sequence belongs to the NAD-dependent DNA ligase family. LigA subfamily. The cofactor is Mg(2+). Mn(2+) is required as a cofactor.

The enzyme catalyses NAD(+) + (deoxyribonucleotide)n-3'-hydroxyl + 5'-phospho-(deoxyribonucleotide)m = (deoxyribonucleotide)n+m + AMP + beta-nicotinamide D-nucleotide.. DNA ligase that catalyzes the formation of phosphodiester linkages between 5'-phosphoryl and 3'-hydroxyl groups in double-stranded DNA using NAD as a coenzyme and as the energy source for the reaction. It is essential for DNA replication and repair of damaged DNA. This chain is DNA ligase, found in Desulfotalea psychrophila (strain LSv54 / DSM 12343).